The primary structure comprises 415 residues: Histidine--tRNA ligase (415 aa).

Belongs to the class-II aminoacyl-tRNA synthetase family. In terms of assembly, homodimer.

The protein resides in the cytoplasm. It catalyses the reaction tRNA(His) + L-histidine + ATP = L-histidyl-tRNA(His) + AMP + diphosphate + H(+). The protein is Histidine--tRNA ligase of Gluconacetobacter diazotrophicus (strain ATCC 49037 / DSM 5601 / CCUG 37298 / CIP 103539 / LMG 7603 / PAl5).